Consider the following 253-residue polypeptide: 5-oxoprolinase subunit A (253 aa).

It belongs to the LamB/PxpA family. As to quaternary structure, forms a complex composed of PxpA, PxpB and PxpC.

It carries out the reaction 5-oxo-L-proline + ATP + 2 H2O = L-glutamate + ADP + phosphate + H(+). Its function is as follows. Catalyzes the cleavage of 5-oxoproline to form L-glutamate coupled to the hydrolysis of ATP to ADP and inorganic phosphate. This is 5-oxoprolinase subunit A from Ruegeria pomeroyi (strain ATCC 700808 / DSM 15171 / DSS-3) (Silicibacter pomeroyi).